A 238-amino-acid chain; its full sequence is Ubiquinone/menaquinone biosynthesis C-methyltransferase UbiE (238 aa).

Positions 62 and 82 each coordinate S-adenosyl-L-methionine.

This sequence belongs to the class I-like SAM-binding methyltransferase superfamily. MenG/UbiE family.

The enzyme catalyses a 2-demethylmenaquinol + S-adenosyl-L-methionine = a menaquinol + S-adenosyl-L-homocysteine + H(+). It catalyses the reaction a 2-methoxy-6-(all-trans-polyprenyl)benzene-1,4-diol + S-adenosyl-L-methionine = a 5-methoxy-2-methyl-3-(all-trans-polyprenyl)benzene-1,4-diol + S-adenosyl-L-homocysteine + H(+). The protein operates within quinol/quinone metabolism; menaquinone biosynthesis; menaquinol from 1,4-dihydroxy-2-naphthoate: step 2/2. Its pathway is cofactor biosynthesis; ubiquinone biosynthesis. Its function is as follows. Methyltransferase required for the conversion of demethylmenaquinol (DMKH2) to menaquinol (MKH2) and the conversion of 2-polyprenyl-6-methoxy-1,4-benzoquinol (DDMQH2) to 2-polyprenyl-3-methyl-6-methoxy-1,4-benzoquinol (DMQH2). The sequence is that of Ubiquinone/menaquinone biosynthesis C-methyltransferase UbiE from Wolbachia pipientis wMel.